The primary structure comprises 132 residues: uncharacterized protein (132 aa).

This is an uncharacterized protein from Homo sapiens (Human).